A 256-amino-acid polypeptide reads, in one-letter code: Glucosamine-6-phosphate deaminase (256 aa).

Aspartate 68 functions as the Proton acceptor; for enolization step in the catalytic mechanism. The active-site For ring-opening step is the asparagine 137. Histidine 139 serves as the catalytic Proton acceptor; for ring-opening step. The active-site For ring-opening step is glutamate 144.

The protein belongs to the glucosamine/galactosamine-6-phosphate isomerase family. NagB subfamily.

It carries out the reaction alpha-D-glucosamine 6-phosphate + H2O = beta-D-fructose 6-phosphate + NH4(+). The protein operates within amino-sugar metabolism; N-acetylneuraminate degradation; D-fructose 6-phosphate from N-acetylneuraminate: step 5/5. In terms of biological role, catalyzes the reversible isomerization-deamination of glucosamine 6-phosphate (GlcN6P) to form fructose 6-phosphate (Fru6P) and ammonium ion. In Mycoplasmopsis pulmonis (strain UAB CTIP) (Mycoplasma pulmonis), this protein is Glucosamine-6-phosphate deaminase.